We begin with the raw amino-acid sequence, 576 residues long: Apolipoprotein N-acyltransferase 1 (576 aa).

The next 7 helical transmembrane spans lie at 15–35 (LILC…FSFF), 38–58 (GVFA…TSIW), 60–80 (AFLW…YWIP), 92–112 (FVSI…FFLF), 128–148 (YILL…FQIF), 168–188 (ICGV…FLIL), and 204–224 (IASL…IGYI). A CN hydrolase domain is found at 236–538 (LSVLMIQPDT…TGTRAFSIRL (303 aa)). Catalysis depends on Glu-285, which acts as the Proton acceptor. Lys-355 is an active-site residue. The active-site Nucleophile is the Cys-446. The helical transmembrane segment at 549-569 (FGNSFLWIFCILILISRLIFV) threads the bilayer.

It belongs to the CN hydrolase family. Apolipoprotein N-acyltransferase subfamily.

The protein resides in the cell inner membrane. It catalyses the reaction N-terminal S-1,2-diacyl-sn-glyceryl-L-cysteinyl-[lipoprotein] + a glycerophospholipid = N-acyl-S-1,2-diacyl-sn-glyceryl-L-cysteinyl-[lipoprotein] + a 2-acyl-sn-glycero-3-phospholipid + H(+). Its pathway is protein modification; lipoprotein biosynthesis (N-acyl transfer). In terms of biological role, catalyzes the phospholipid dependent N-acylation of the N-terminal cysteine of apolipoprotein, the last step in lipoprotein maturation. This is Apolipoprotein N-acyltransferase 1 from Leptospira interrogans serogroup Icterohaemorrhagiae serovar copenhageni (strain Fiocruz L1-130).